Here is a 426-residue protein sequence, read N- to C-terminus: MFGRNFPFFNSIGGFYPRDSLDPRKPSGTGYTSKVRVRDKYHIVGFISSGTYGRVYKAIGKDGRKGEFAIKKFKPDKEGEIIQYTGLSQSAIREMSLCSELDHSNVVQLAEIILEDKCIFMVFEYTEHDLLQIIHHHTQPQRHAIPAPMIKSILFQLLNGLLYLHTNWVLHRDLKPANILVTSSGAVRIGDLGLARLFYKPLNSLYSGDKVVVTIWYRAPELLMGSRHYTPAVDLWAVGCIFAELLSLRPIFKGEEAKMDSKKTVPFQRNQMMKIVEIMGLPRKETWPGLVAMPEFSQLQSLAMARGHLNRQSNLEGWYQSCLKNNGYSPTSSAGTPGPEGFDLLSRLLEYDPLKRISAQEALEHPYFTTGTPITANCFAGYEGKYPHRRVTQDDNDIRSGSLPGTKRSGLPDDSLMGRAAKRLKE.

One can recognise a Protein kinase domain in the interval Tyr41–Phe368. ATP contacts are provided by residues Ile47–Val55 and Lys71. Residue Asp173 is the Proton acceptor of the active site. The segment at Arg390–Glu426 is disordered.

It belongs to the protein kinase superfamily. CMGC Ser/Thr protein kinase family. CDC2/CDKX subfamily. In terms of assembly, component of the srb8-11 complex, a regulatory module of the Mediator complex. Requires Mg(2+) as cofactor.

It is found in the nucleus. It carries out the reaction L-seryl-[protein] + ATP = O-phospho-L-seryl-[protein] + ADP + H(+). The catalysed reaction is L-threonyl-[protein] + ATP = O-phospho-L-threonyl-[protein] + ADP + H(+). The enzyme catalyses [DNA-directed RNA polymerase] + ATP = phospho-[DNA-directed RNA polymerase] + ADP + H(+). Its function is as follows. Component of the srb8-11 complex. The srb8-11 complex is a regulatory module of the Mediator complex which is itself involved in regulation of basal and activated RNA polymerase II-dependent transcription. The srb8-11 complex may be involved in the transcriptional repression of a subset of genes regulated by Mediator. It may inhibit the association of the Mediator complex with RNA polymerase II to form the holoenzyme complex. The srb8-11 complex phosphorylates the C-terminal domain (CTD) of the largest subunit of RNA polymerase II. The sequence is that of Serine/threonine-protein kinase ssn3 (ssn3) from Aspergillus clavatus (strain ATCC 1007 / CBS 513.65 / DSM 816 / NCTC 3887 / NRRL 1 / QM 1276 / 107).